A 259-amino-acid chain; its full sequence is Polycomb group RING finger protein 1 (259 aa).

An RING-type zinc finger spans residues 45 to 84 (CYLCAGYFIDATTITECLHTFCKSCIVKYLQTSKYCPLCN).

Component of a PRC1-like complex.

It localises to the nucleus. Functionally, component of a Polycomb group (PcG) multiprotein PRC1-like complex, a complex class required to maintain the transcriptionally repressive state of many genes, including Hox genes, throughout development. PcG PRC1 complex acts via chromatin remodeling and modification of histones; it mediates monoubiquitination of histone H2A 'Lys-119', rendering chromatin heritably changed in its expressibility. This is Polycomb group RING finger protein 1 (pcgf1) from Xenopus laevis (African clawed frog).